The primary structure comprises 208 residues: Regulator of G-protein signaling 4 (208 aa).

Residues Cys2, Cys12, and Cys95 are each lipidated (S-palmitoyl cysteine). The region spanning 62–178 is the RGS domain; it reads SLENLIHHDR…LKSPYLDLVS (117 aa).

Post-translationally, palmitoylated on Cys-2 and/or Cys-12. In terms of processing, phosphorylated by cyclic GMP-dependent protein kinase. As to expression, expressed in the developing nervous system.

In terms of biological role, inhibits signal transduction by increasing the GTPase activity of G protein alpha subunits thereby driving them into their inactive GDP-bound form. Activity on G(z)-alpha is inhibited by phosphorylation of the G-protein. Activity on G(z)-alpha and G(i)-alpha-1 is inhibited by palmitoylation of the G-protein. The chain is Regulator of G-protein signaling 4 (RGS4) from Gallus gallus (Chicken).